A 365-amino-acid polypeptide reads, in one-letter code: MFEINPIKNRLQDVSERTNILRGYLDYDAKKERLEEVNAELEQPDVWNEPERAQALGKERASLEAVVETIDLLDQGVEDVDGLLELAVEEEDQETFDEIEPELAELEAKLAKLEFRRMFSGDHDASDCYIDLQSGSGGTEAQDWTSMMLRMYLRWAEAKGFKVEVIEVSEGEVAGLKGATVRIAGEYAYGWLRTETGVHRLVRKSPFDSSGRRHTSFASAFIYPEIDDNIQIDINPSDLRIDVYRASGAGGQHVNTTESAVRITHVPTNIVVQCQNDRSQHKNKDQAMKQLRAKLFEYELQKQNAEKQANEDAKSDIGWGSQIRSYVLDDSRIKDLRTGIENRNTQAVLDGDLDKFIEASLKSGL.

Glutamine 252 bears the N5-methylglutamine mark.

Belongs to the prokaryotic/mitochondrial release factor family. In terms of processing, methylated by PrmC. Methylation increases the termination efficiency of RF2.

The protein localises to the cytoplasm. Functionally, peptide chain release factor 2 directs the termination of translation in response to the peptide chain termination codons UGA and UAA. The chain is Peptide chain release factor 2 from Aliivibrio fischeri (strain ATCC 700601 / ES114) (Vibrio fischeri).